Reading from the N-terminus, the 351-residue chain is uncharacterized protein (351 aa).

6 residues coordinate Zn(2+): histidine 23, histidine 25, lysine 151, histidine 184, histidine 212, and aspartate 270. Residue lysine 151 is modified to N6-carboxylysine.

It belongs to the metallo-dependent hydrolases superfamily. Phosphotriesterase family. Requires Zn(2+) as cofactor.

This is an uncharacterized protein from Mycoplasma pneumoniae (strain ATCC 29342 / M129 / Subtype 1) (Mycoplasmoides pneumoniae).